A 318-amino-acid polypeptide reads, in one-letter code: MASQNRILVLGPTGAIGRHVVWASIKAGNPTYALIRKTPGDINKPSLVAAANPESKEELLQSFKAAGVILLEGDMNDHEALVKAIKQVDTVICTFGRLLILDQVKIIKAIKEAGNVKRFFPSEFGLDVDRHDAVDPVRPVFDEKASIRRVVEAEGVPYTYLCCHAFTGYFLRNLAQFDATEPPRDKVIILGDGNVKGAYVTEADVGTYTIRAANDPRTLNKAVHIRLPHNYLTSNEVVSLWEKKIGKTLEKSYISEEKVLKDINVSTFPHNYLLALYHSQQIKGDAVYEIDPAKDAEAYDLYPDVKYTTADEYLDQFV.

Residues G11–G17, R36, and K44 each bind NADP(+). K144 acts as the Proton acceptor in catalysis. Position 148 (R148) interacts with NADP(+).

This sequence belongs to the NmrA-type oxidoreductase family. Isoflavone reductase subfamily.

The enzyme catalyses (3R)-vestitone + NADP(+) = 2'-hydroxyformononetin + NADPH + 2 H(+). The protein operates within phytoalexin biosynthesis; pterocarpan phytoalexin biosynthesis. In terms of biological role, reduces achiral isoflavones to chiral isoflavanones during the biosynthesis of chiral pterocarpan phytoalexins. This is Isoflavone reductase (IFR) from Cicer arietinum (Chickpea).